Here is a 185-residue protein sequence, read N- to C-terminus: Peptidoglycan-recognition protein SC1a/b (185 aa).

A signal peptide spans 1-21 (MVSKVALLLAVLVCSQYMAQG). The N-acetylmuramoyl-L-alanine amidase domain maps to 46–170 (SYAIIHHTAG…RQVSATECPG (125 aa)). Histidine 51 is a Zn(2+) binding site. A disulfide bridge links cysteine 58 with cysteine 64. Residues histidine 160 and cysteine 168 each contribute to the Zn(2+) site.

It belongs to the N-acetylmuramoyl-L-alanine amidase 2 family. Zn(2+) is required as a cofactor.

The protein localises to the secreted. It carries out the reaction Hydrolyzes the link between N-acetylmuramoyl residues and L-amino acid residues in certain cell-wall glycopeptides.. In terms of biological role, N-acetylmuramyl-L-alanine amidase involved in innate immunity by degrading bacterial peptidoglycans (PGN). Plays a scavenger role by digesting biologically active PGN into biologically inactive fragments. Has no direct bacteriolytic activity. The sequence is that of Peptidoglycan-recognition protein SC1a/b (PGRP-SC1a) from Drosophila simulans (Fruit fly).